Reading from the N-terminus, the 164-residue chain is Phosphopantetheine adenylyltransferase (164 aa).

Substrate is bound at residue Ser9. Residues 9–10 (SF) and His17 contribute to the ATP site. Substrate contacts are provided by Lys41, Leu73, and Lys87. ATP contacts are provided by residues 88–90 (GLR), Glu98, and 123–129 (YSYISSS).

The protein belongs to the bacterial CoaD family. Homohexamer. The cofactor is Mg(2+).

It localises to the cytoplasm. It carries out the reaction (R)-4'-phosphopantetheine + ATP + H(+) = 3'-dephospho-CoA + diphosphate. Its pathway is cofactor biosynthesis; coenzyme A biosynthesis; CoA from (R)-pantothenate: step 4/5. Functionally, reversibly transfers an adenylyl group from ATP to 4'-phosphopantetheine, yielding dephospho-CoA (dPCoA) and pyrophosphate. In Clostridium perfringens (strain SM101 / Type A), this protein is Phosphopantetheine adenylyltransferase.